A 146-amino-acid chain; its full sequence is Histone H2B (146 aa).

Over residues Met1 to Ala16 the composition is skewed to basic and acidic residues. The tract at residues Met1 to Ala52 is disordered. Residues Lys7, Lys35, and Lys36 each carry the N6-acetyllysine modification. Lys142 participates in a covalent cross-link: Glycyl lysine isopeptide (Lys-Gly) (interchain with G-Cter in ubiquitin).

Belongs to the histone H2B family. The nucleosome is a histone octamer containing two molecules each of H2A, H2B, H3 and H4 assembled in one H3-H4 heterotetramer and two H2A-H2B heterodimers. The octamer wraps approximately 147 bp of DNA. In terms of processing, can be acetylated to form H2BK6ac, H2BK33ac and H2BK34ac. Post-translationally, monoubiquitinated to form H2BK143ub1; may give a specific tag for epigenetic transcriptional activation.

The protein localises to the nucleus. It is found in the chromosome. Its function is as follows. Core component of nucleosome. Nucleosomes wrap and compact DNA into chromatin, limiting DNA accessibility to the cellular machineries which require DNA as a template. Histones thereby play a central role in transcription regulation, DNA repair, DNA replication and chromosomal stability. DNA accessibility is regulated via a complex set of post-translational modifications of histones, also called histone code, and nucleosome remodeling. This chain is Histone H2B (HIS2B), found in Nicotiana tabacum (Common tobacco).